We begin with the raw amino-acid sequence, 324 residues long: Lipoyl synthase (324 aa).

Residues Cys71, Cys76, Cys82, Cys97, Cys101, Cys104, and Ser311 each coordinate [4Fe-4S] cluster. Positions 83–300 (FGHGTATFLI…GDKAREMGFT (218 aa)) constitute a Radical SAM core domain.

The protein belongs to the radical SAM superfamily. Lipoyl synthase family. [4Fe-4S] cluster serves as cofactor.

The protein resides in the cytoplasm. The catalysed reaction is [[Fe-S] cluster scaffold protein carrying a second [4Fe-4S](2+) cluster] + N(6)-octanoyl-L-lysyl-[protein] + 2 oxidized [2Fe-2S]-[ferredoxin] + 2 S-adenosyl-L-methionine + 4 H(+) = [[Fe-S] cluster scaffold protein] + N(6)-[(R)-dihydrolipoyl]-L-lysyl-[protein] + 4 Fe(3+) + 2 hydrogen sulfide + 2 5'-deoxyadenosine + 2 L-methionine + 2 reduced [2Fe-2S]-[ferredoxin]. It functions in the pathway protein modification; protein lipoylation via endogenous pathway; protein N(6)-(lipoyl)lysine from octanoyl-[acyl-carrier-protein]: step 2/2. In terms of biological role, catalyzes the radical-mediated insertion of two sulfur atoms into the C-6 and C-8 positions of the octanoyl moiety bound to the lipoyl domains of lipoate-dependent enzymes, thereby converting the octanoylated domains into lipoylated derivatives. The polypeptide is Lipoyl synthase (Nitrosococcus oceani (strain ATCC 19707 / BCRC 17464 / JCM 30415 / NCIMB 11848 / C-107)).